Consider the following 375-residue polypeptide: Succinyl-diaminopimelate desuccinylase (375 aa).

His-66 provides a ligand contact to Zn(2+). Asp-68 is a catalytic residue. Zn(2+) is bound at residue Asp-99. Glu-133 acts as the Proton acceptor in catalysis. Zn(2+) contacts are provided by Glu-134, Glu-162, and His-348.

This sequence belongs to the peptidase M20A family. DapE subfamily. Homodimer. It depends on Zn(2+) as a cofactor. Co(2+) is required as a cofactor.

It catalyses the reaction N-succinyl-(2S,6S)-2,6-diaminopimelate + H2O = (2S,6S)-2,6-diaminopimelate + succinate. Its pathway is amino-acid biosynthesis; L-lysine biosynthesis via DAP pathway; LL-2,6-diaminopimelate from (S)-tetrahydrodipicolinate (succinylase route): step 3/3. Functionally, catalyzes the hydrolysis of N-succinyl-L,L-diaminopimelic acid (SDAP), forming succinate and LL-2,6-diaminopimelate (DAP), an intermediate involved in the bacterial biosynthesis of lysine and meso-diaminopimelic acid, an essential component of bacterial cell walls. The protein is Succinyl-diaminopimelate desuccinylase of Escherichia coli O6:K15:H31 (strain 536 / UPEC).